The primary structure comprises 394 residues: Muscle cell intermediate filament protein AV71 (394 aa).

Positions 1-73 (AEINLVRRRV…RVHDQEITEL (73 aa)) are coil 1B. The region spanning 1–239 (AEINLVRRRV…KMLEGEENRA (239 aa)) is the IF rod domain. Residues 74-91 (QAMAARDTTPENREYFKN) form a linker 12 region. A coil 2 region spans residues 92–239 (ELSSAIRDIR…KMLEGEENRA (148 aa)). The segment at 240–394 (GLRQLVEQVV…HIQRSSHTIN (155 aa)) is tail. Positions 272-389 (SRTSFQRSAK…EERASHIQRS (118 aa)) constitute an LTD domain.

Belongs to the intermediate filament family.

This is Muscle cell intermediate filament protein AV71 (AV71) from Acanthocheilonema viteae (Filarial nematode worm).